A 692-amino-acid polypeptide reads, in one-letter code: Elongation factor G (692 aa).

Residues 8-282 (AKTRNIGIMA…AVIDYLPSPL (275 aa)) enclose the tr-type G domain. Residues 17–24 (AHVDAGKT), 81–85 (DTPGH), and 135–138 (NKMD) each bind GTP.

The protein belongs to the TRAFAC class translation factor GTPase superfamily. Classic translation factor GTPase family. EF-G/EF-2 subfamily.

Its subcellular location is the cytoplasm. Its function is as follows. Catalyzes the GTP-dependent ribosomal translocation step during translation elongation. During this step, the ribosome changes from the pre-translocational (PRE) to the post-translocational (POST) state as the newly formed A-site-bound peptidyl-tRNA and P-site-bound deacylated tRNA move to the P and E sites, respectively. Catalyzes the coordinated movement of the two tRNA molecules, the mRNA and conformational changes in the ribosome. In Streptococcus uberis (strain ATCC BAA-854 / 0140J), this protein is Elongation factor G.